The primary structure comprises 502 residues: ATP synthase subunit beta (502 aa).

Residue 153 to 160 (GGAGVGKT) coordinates ATP.

Belongs to the ATPase alpha/beta chains family. In terms of assembly, F-type ATPases have 2 components, CF(1) - the catalytic core - and CF(0) - the membrane proton channel. CF(1) has five subunits: alpha(3), beta(3), gamma(1), delta(1), epsilon(1). CF(0) has three main subunits: a(1), b(2) and c(9-12). The alpha and beta chains form an alternating ring which encloses part of the gamma chain. CF(1) is attached to CF(0) by a central stalk formed by the gamma and epsilon chains, while a peripheral stalk is formed by the delta and b chains.

The protein localises to the cell membrane. It catalyses the reaction ATP + H2O + 4 H(+)(in) = ADP + phosphate + 5 H(+)(out). In terms of biological role, produces ATP from ADP in the presence of a proton gradient across the membrane. The catalytic sites are hosted primarily by the beta subunits. In Amoebophilus asiaticus (strain 5a2), this protein is ATP synthase subunit beta.